A 475-amino-acid chain; its full sequence is MSPQTETKASVGFKAGVKDYKLTYHTPDYETKDTDILAAFRVTPQPGVPPEEAGAAVAAESSTGTWTTVWTDGLTSLDRYKGRCYHIEPVAGEESQFIAYVAYPLDLFEEGSVTNMFTSIVGNVFGFKALRALRLEDLRIPPAYSKTFQGPPHGIQVERDKLNKYGRPLLGCTIKPKLGLSAKNYGRAVYECLRGGLDFTKDDENVNSQPFMRWRDRFLFCAEAIYKAQAETGEIKGHYLNATAGTCEEMIKRAVFARELGVPIVMHDYLTGGFTANTSLAHYCRDNGLLLHIHRAMHAVIDRQKNHGMHFRVLAKALRMSGGDHIHAGTVVGKLEGEREITLGFVDLLRDDYIEKDRSRGIYFTQDWVSLPGVLPVASGGIHVWHMPALTEIFGDDSVLQFGGGTLGHPWGNAPGAVANRVALEACVQARNEGRDLACEGNEIIRAAAKWSPELAAACEVWKEIKFEFPAMDTL.

A propeptide spanning residues 1–2 (MS) is cleaved from the precursor. Pro3 bears the N-acetylproline mark. At Lys14 the chain carries N6,N6,N6-trimethyllysine. The substrate site is built by Asn123 and Thr173. Lys175 acts as the Proton acceptor in catalysis. Substrate is bound at residue Lys177. 3 residues coordinate Mg(2+): Lys201, Asp203, and Glu204. At Lys201 the chain carries N6-carboxylysine. The active-site Proton acceptor is the His294. Residues Arg295, His327, and Ser379 each contribute to the substrate site.

It belongs to the RuBisCO large chain family. Type I subfamily. In terms of assembly, heterohexadecamer of 8 large chains and 8 small chains; disulfide-linked. The disulfide link is formed within the large subunit homodimers. The cofactor is Mg(2+). In terms of processing, the disulfide bond which can form in the large chain dimeric partners within the hexadecamer appears to be associated with oxidative stress and protein turnover.

Its subcellular location is the plastid. It localises to the chloroplast. The catalysed reaction is 2 (2R)-3-phosphoglycerate + 2 H(+) = D-ribulose 1,5-bisphosphate + CO2 + H2O. It catalyses the reaction D-ribulose 1,5-bisphosphate + O2 = 2-phosphoglycolate + (2R)-3-phosphoglycerate + 2 H(+). Functionally, ruBisCO catalyzes two reactions: the carboxylation of D-ribulose 1,5-bisphosphate, the primary event in carbon dioxide fixation, as well as the oxidative fragmentation of the pentose substrate in the photorespiration process. Both reactions occur simultaneously and in competition at the same active site. This is Ribulose bisphosphate carboxylase large chain from Ostrya virginiana (American hophornbeam).